A 510-amino-acid polypeptide reads, in one-letter code: Cytochrome P450 703A2 (510 aa).

Residues 2 to 22 (ILVLASLFAVLILNVLLWRWL) form a helical membrane-spanning segment. C451 is a binding site for heme.

This sequence belongs to the cytochrome P450 family. Heme is required as a cofactor.

It localises to the membrane. The catalysed reaction is dodecanoate + reduced [NADPH--hemoprotein reductase] + O2 = 7-hydroxydodecanoate + oxidized [NADPH--hemoprotein reductase] + H2O + H(+). Functionally, involved in pollen wall development. Catalyzes the conversion of medium-chain saturated fatty acids to the corresponding monohydroxylated fatty acids, with a preferential hydroxylation of lauric acid at the C-7 position. In-chain hydroxylated fatty acids, together with omega-hydroxylated fatty acids, are key monomeric aliphatic building blocks for sporopollenin synthesis during exine formation. In Arabidopsis thaliana (Mouse-ear cress), this protein is Cytochrome P450 703A2.